The chain runs to 449 residues: MNLNQIENVYFIGIGGIGMSALARYFKYIGKKVSGYDKTPSMLTSELIESGIDIHFEDNINLIPSNYYVENTLVIFTPAVPASHSEWHYFIERNYQIKKRAEVLGIITKDTFSFAVAGTHGKTTTSSILGHILHQSGADVTAFVGGIVENYNSNLIGTGKTVTVVEADEFDRSFLHLHPDIACVTSMDADHLDIYGTSDAIQASFIEFASKVEDKSKLFITKELPLEGVQCAINEDAVYKAYNVRIEDGNYVFDVQTPSEIMKDLRFGLPGKHNLMNGLMAIAMAKTYGTPTDAIAKAIASFNGIRRRFSYQIKSDKLVYIDDYAHHPTEINAVHQAVRELYPGRKVLAVFQPHLFSRTRDFADGFAESLSQFDEVFLMDIYPARELPMEGITSQWLLDKMTNPNRKIVAKEDLLAEIKASDAPIIVTIGAGDIGEMVPSIKKMLNENI.

G118–T124 lines the ATP pocket.

This sequence belongs to the MurCDEF family.

It localises to the cytoplasm. The enzyme catalyses UDP-N-acetyl-alpha-D-muramate + L-alanine + ATP = UDP-N-acetyl-alpha-D-muramoyl-L-alanine + ADP + phosphate + H(+). It participates in cell wall biogenesis; peptidoglycan biosynthesis. In terms of biological role, cell wall formation. This Flavobacterium johnsoniae (strain ATCC 17061 / DSM 2064 / JCM 8514 / BCRC 14874 / CCUG 350202 / NBRC 14942 / NCIMB 11054 / UW101) (Cytophaga johnsonae) protein is UDP-N-acetylmuramate--L-alanine ligase.